The following is a 180-amino-acid chain: Ribosome maturation factor RimM (180 aa).

The 73-residue stretch at 97-169 folds into the PRC barrel domain; that stretch reads PGELSWDFFV…IITVDLPEGL (73 aa).

It belongs to the RimM family. In terms of assembly, binds ribosomal protein uS19.

It is found in the cytoplasm. Functionally, an accessory protein needed during the final step in the assembly of 30S ribosomal subunit, possibly for assembly of the head region. Essential for efficient processing of 16S rRNA. May be needed both before and after RbfA during the maturation of 16S rRNA. It has affinity for free ribosomal 30S subunits but not for 70S ribosomes. This Bacteroides fragilis (strain YCH46) protein is Ribosome maturation factor RimM.